The following is a 186-amino-acid chain: Pyridoxal 5'-phosphate synthase subunit PdxT (186 aa).

46–48 (GES) is a binding site for L-glutamine. The Nucleophile role is filled by C78. L-glutamine contacts are provided by residues R105 and 134 to 135 (IR). Catalysis depends on charge relay system residues H170 and E172.

It belongs to the glutaminase PdxT/SNO family. In terms of assembly, in the presence of PdxS, forms a dodecamer of heterodimers. Only shows activity in the heterodimer.

The catalysed reaction is aldehydo-D-ribose 5-phosphate + D-glyceraldehyde 3-phosphate + L-glutamine = pyridoxal 5'-phosphate + L-glutamate + phosphate + 3 H2O + H(+). It carries out the reaction L-glutamine + H2O = L-glutamate + NH4(+). Its pathway is cofactor biosynthesis; pyridoxal 5'-phosphate biosynthesis. Catalyzes the hydrolysis of glutamine to glutamate and ammonia as part of the biosynthesis of pyridoxal 5'-phosphate. The resulting ammonia molecule is channeled to the active site of PdxS. The polypeptide is Pyridoxal 5'-phosphate synthase subunit PdxT (Clostridium acetobutylicum (strain ATCC 824 / DSM 792 / JCM 1419 / IAM 19013 / LMG 5710 / NBRC 13948 / NRRL B-527 / VKM B-1787 / 2291 / W)).